The chain runs to 546 residues: 2-isopropylmalate synthase (546 aa).

The Pyruvate carboxyltransferase domain maps to 8–271 (ILIFDTTLRD…NSFFGRSSDS (264 aa)). Aspartate 17, histidine 208, histidine 210, and asparagine 244 together coordinate Mn(2+). Residues 408-546 (QLSHVQVSCG…KNKVLSNPKK (139 aa)) form a regulatory domain region.

Belongs to the alpha-IPM synthase/homocitrate synthase family. LeuA type 1 subfamily. In terms of assembly, homodimer. The cofactor is Mn(2+).

The protein localises to the cytoplasm. It catalyses the reaction 3-methyl-2-oxobutanoate + acetyl-CoA + H2O = (2S)-2-isopropylmalate + CoA + H(+). Its pathway is amino-acid biosynthesis; L-leucine biosynthesis; L-leucine from 3-methyl-2-oxobutanoate: step 1/4. Functionally, catalyzes the condensation of the acetyl group of acetyl-CoA with 3-methyl-2-oxobutanoate (2-ketoisovalerate) to form 3-carboxy-3-hydroxy-4-methylpentanoate (2-isopropylmalate). The sequence is that of 2-isopropylmalate synthase from Prochlorococcus marinus subsp. pastoris (strain CCMP1986 / NIES-2087 / MED4).